Consider the following 357-residue polypeptide: Chorismate synthase (357 aa).

Basic and acidic residues predominate over residues 38 to 49; it reads EKDIQPDLDRRK. The disordered stretch occupies residues 38-60; it reads EKDIQPDLDRRKPGTSRYTTPRR. Arg-48 and Arg-54 together coordinate NADP(+). FMN contacts are provided by residues 125 to 127, 243 to 244, Gly-283, 298 to 302, and Arg-324; these read RSS, NA, and KPTSS.

Belongs to the chorismate synthase family. As to quaternary structure, homotetramer. The cofactor is FMNH2.

The catalysed reaction is 5-O-(1-carboxyvinyl)-3-phosphoshikimate = chorismate + phosphate. It participates in metabolic intermediate biosynthesis; chorismate biosynthesis; chorismate from D-erythrose 4-phosphate and phosphoenolpyruvate: step 7/7. Its function is as follows. Catalyzes the anti-1,4-elimination of the C-3 phosphate and the C-6 proR hydrogen from 5-enolpyruvylshikimate-3-phosphate (EPSP) to yield chorismate, which is the branch point compound that serves as the starting substrate for the three terminal pathways of aromatic amino acid biosynthesis. This reaction introduces a second double bond into the aromatic ring system. The chain is Chorismate synthase from Haemophilus influenzae (strain PittGG).